We begin with the raw amino-acid sequence, 229 residues long: 4-hydroxy-tetrahydrodipicolinate reductase (229 aa).

Residues 10-15 (GSAGRM), 78-80 (GTT), and 102-105 (SSNM) contribute to the NAD(+) site. Residue histidine 133 is the Proton donor/acceptor of the active site. Histidine 134 contributes to the (S)-2,3,4,5-tetrahydrodipicolinate binding site. Lysine 137 serves as the catalytic Proton donor. 143–144 (GT) is a binding site for (S)-2,3,4,5-tetrahydrodipicolinate.

It belongs to the DapB family.

Its subcellular location is the cytoplasm. The enzyme catalyses (S)-2,3,4,5-tetrahydrodipicolinate + NAD(+) + H2O = (2S,4S)-4-hydroxy-2,3,4,5-tetrahydrodipicolinate + NADH + H(+). It carries out the reaction (S)-2,3,4,5-tetrahydrodipicolinate + NADP(+) + H2O = (2S,4S)-4-hydroxy-2,3,4,5-tetrahydrodipicolinate + NADPH + H(+). The protein operates within amino-acid biosynthesis; L-lysine biosynthesis via DAP pathway; (S)-tetrahydrodipicolinate from L-aspartate: step 4/4. Its function is as follows. Catalyzes the conversion of 4-hydroxy-tetrahydrodipicolinate (HTPA) to tetrahydrodipicolinate. This is 4-hydroxy-tetrahydrodipicolinate reductase from Bdellovibrio bacteriovorus (strain ATCC 15356 / DSM 50701 / NCIMB 9529 / HD100).